We begin with the raw amino-acid sequence, 324 residues long: MEPMATVTLKDIKEAHKRIEKYIHKTPVLTNSTINELAGKELYFKCENLQKTGSFKMRGACNAIFSLDEEELSKGVVTHSSGNHGQALSYASKVRCVKCYVVVPEDAPSVKLNAICGYGATVTKCKATLEARESNTKQLIEQHSCKLIHPFDNLQVIAGQGTASLELMEQVENLDAIITPVGGGGLLSGTCITAKSLNPNIKVFAAEPLGADDTYRSLLSGEIQKHTPGKPNTIADGLLTTVGSLTFPIIKENCDGVILVTEDEIKYAMKLVWERMKIIIEPSSATTLAAILKQEFKDKKDIKKVGIIISGGNVDLSSISKILN.

3 residues coordinate ATP: Ser32, Lys51, and Thr52. Residue Lys56 is the Proton acceptor of the active site. Lys56 is subject to N6-(pyridoxal phosphate)lysine. Residue Thr78 coordinates Ca(2+). The active-site Proton acceptor is the Ser81. Asn83 contributes to the pyridoxal 5'-phosphate binding site. ATP contacts are provided by Gln86 and Tyr118. Asp175 lines the Mg(2+) pocket. Pyridoxal 5'-phosphate contacts are provided by Gly182, Gly183, Gly184, and Gly185. Ca(2+) contacts are provided by Glu207, Ala211, and Asp213. Residues Glu207, Ala211, and Asp213 each contribute to the Mg(2+) site. Mn(2+) contacts are provided by Glu207, Ala211, and Asp213. ATP is bound at residue Lys277. Ser310 serves as a coordination point for pyridoxal 5'-phosphate. Asn313 is a binding site for ATP.

Belongs to the serine/threonine dehydratase family. As to quaternary structure, homodimer. It depends on Mg(2+) as a cofactor. Requires Mn(2+) as cofactor. The cofactor is Ca(2+). Pyridoxal 5'-phosphate is required as a cofactor.

It catalyses the reaction L-serine = D-serine. It carries out the reaction L-serine = pyruvate + NH4(+). The enzyme catalyses D-serine = pyruvate + NH4(+). In terms of biological role, catalyzes the synthesis of D-serine from L-serine. Has dehydratase activity towards both L-serine and D-serine. This chain is Serine racemase (srr), found in Dictyostelium discoideum (Social amoeba).